Consider the following 835-residue polypeptide: Beta-galactosidase (835 aa).

The N-terminal stretch at 1 to 22 (MGFWMAMLLMLLLCLWVSCGIA) is a signal peptide. Residue glutamate 180 is the Proton donor of the active site. Glutamate 249 acts as the Nucleophile in catalysis. Residues 749-835 (RPLRPKAHLK…KKLSVEAICS (87 aa)) form the SUEL-type lectin domain.

It belongs to the glycosyl hydrolase 35 family.

The catalysed reaction is Hydrolysis of terminal non-reducing beta-D-galactose residues in beta-D-galactosides.. In terms of biological role, involved in cell wall degradation. Degrades polysaccharides containing beta-(1--&gt;4)-linked galactans, acting as an exo-(1--&gt;4)-beta-D-galactanase. In Solanum lycopersicum (Tomato), this protein is Beta-galactosidase.